Here is a 151-residue protein sequence, read N- to C-terminus: tRNA-specific adenosine deaminase (151 aa).

The 119-residue stretch at 4 to 122 (NRDSYWMKIA…PFLKKIFINL (119 aa)) folds into the CMP/dCMP-type deaminase domain. Histidine 55 is a binding site for Zn(2+). The active-site Proton donor is the glutamate 57. Cysteine 85 and cysteine 88 together coordinate Zn(2+).

This sequence belongs to the cytidine and deoxycytidylate deaminase family. In terms of assembly, homodimer. It depends on Zn(2+) as a cofactor.

The catalysed reaction is adenosine(34) in tRNA + H2O + H(+) = inosine(34) in tRNA + NH4(+). Its function is as follows. Catalyzes the deamination of adenosine to inosine at the wobble position 34 of tRNA(Arg2). The protein is tRNA-specific adenosine deaminase of Buchnera aphidicola subsp. Schizaphis graminum (strain Sg).